Reading from the N-terminus, the 649-residue chain is Transcription factor tau 95 kDa subunit (649 aa).

The interval Met-1 to Ala-21 is disordered. The span at Thr-9–Asp-19 shows a compositional bias: polar residues. Repeat unit 1 spans residues Pro-221 to Pro-239. The 2 X repeats, Pro-rich stretch occupies residues Pro-221 to Pro-419. The short motif at Ala-296–Lys-300 is the Nuclear localization signal element. Repeat unit 2 spans residues Pro-400–Pro-419. The disordered stretch occupies residues Ile-556 to Asp-612. Acidic residues-rich tracts occupy residues Asp-560–Thr-584 and Ile-594–Ser-610. Phosphoserine is present on Ser-617.

It belongs to the TFIIIC subunit 5 family. As to quaternary structure, component of the TFIIIC complex composed of TFC1, TFC3, TFC4, TFC6, TFC7 and TFC8. The subunits are organized in two globular domains, tauA and tauB, connected by a proteolysis-sensitive and flexible linker. Interacts with TFC3, TFC4 and TFC6.

It localises to the nucleus. Its function is as follows. TFIIIC mediates tRNA and 5S RNA gene activation by binding to intragenic promoter elements. Upstream of the transcription start site, TFIIIC assembles the initiation complex TFIIIB-TFIIIC-tDNA, which is sufficient for RNA polymerase III recruitment and function. Part of the tauA domain of TFIIIC that binds boxA DNA promoter sites of tRNA and similar genes. Participates in the interconnection of tauA with tauB via its contacts with TFC3 and TFC6. Serves as a scaffold critical for tauA-DNA spatial configuration and tauB-DNA stability. This chain is Transcription factor tau 95 kDa subunit (TFC1), found in Saccharomyces cerevisiae (strain ATCC 204508 / S288c) (Baker's yeast).